The primary structure comprises 192 residues: Soluble inorganic pyrophosphatase 2 (192 aa).

Positions 38, 52, and 64 each coordinate substrate. Residues Asp-74, Asp-79, and Asp-111 each contribute to the Mg(2+) site. Residue Tyr-148 participates in substrate binding.

Monomer. The cofactor is Mg(2+). Post-translationally, the N-terminus is blocked.

It localises to the mitochondrion. It carries out the reaction diphosphate + H2O = 2 phosphate + H(+). The polypeptide is Soluble inorganic pyrophosphatase 2 (ppa2) (Chlamydomonas reinhardtii (Chlamydomonas smithii)).